The sequence spans 335 residues: Glycerol-3-phosphate dehydrogenase [NAD(P)+] (335 aa).

Trp-12 and Lys-106 together coordinate NADPH. Sn-glycerol 3-phosphate is bound by residues Lys-106, Gly-136, and Ser-138. Ala-140 is an NADPH binding site. Sn-glycerol 3-phosphate-binding residues include Lys-191, Asp-244, Ser-254, Arg-255, and Asn-256. The active-site Proton acceptor is Lys-191. Residue Arg-255 participates in NADPH binding. Residues Val-279 and Glu-281 each contribute to the NADPH site.

Belongs to the NAD-dependent glycerol-3-phosphate dehydrogenase family.

Its subcellular location is the cytoplasm. The catalysed reaction is sn-glycerol 3-phosphate + NAD(+) = dihydroxyacetone phosphate + NADH + H(+). It catalyses the reaction sn-glycerol 3-phosphate + NADP(+) = dihydroxyacetone phosphate + NADPH + H(+). The protein operates within membrane lipid metabolism; glycerophospholipid metabolism. In terms of biological role, catalyzes the reduction of the glycolytic intermediate dihydroxyacetone phosphate (DHAP) to sn-glycerol 3-phosphate (G3P), the key precursor for phospholipid synthesis. This is Glycerol-3-phosphate dehydrogenase [NAD(P)+] from Fusobacterium nucleatum subsp. nucleatum (strain ATCC 25586 / DSM 15643 / BCRC 10681 / CIP 101130 / JCM 8532 / KCTC 2640 / LMG 13131 / VPI 4355).